The chain runs to 209 residues: Small ribosomal subunit protein uS4 (209 aa).

Residues 99 to 162 enclose the S4 RNA-binding domain; it reads RRLDNMVYRL…RKNNKIIEAM (64 aa).

Belongs to the universal ribosomal protein uS4 family. As to quaternary structure, part of the 30S ribosomal subunit. Contacts protein S5. The interaction surface between S4 and S5 is involved in control of translational fidelity.

In terms of biological role, one of the primary rRNA binding proteins, it binds directly to 16S rRNA where it nucleates assembly of the body of the 30S subunit. Functionally, with S5 and S12 plays an important role in translational accuracy. The protein is Small ribosomal subunit protein uS4 of Syntrophus aciditrophicus (strain SB).